The chain runs to 217 residues: Ras-like protein (217 aa).

Residue 17–24 coordinates GTP; sequence GGGGVGKS. The short motif at 39 to 47 is the Effector region element; sequence YDPTIEDSY. GTP is bound by residues 64–68 and 123–126; these read DTAGQ and NKCD. Residues 181 to 200 are disordered; sequence TGRMMTGGGGGGPPGTYAGK. Over residues 185 to 194 the composition is skewed to gly residues; it reads MTGGGGGGPP. 2 S-palmitoyl cysteine lipidation sites follow: C210 and C211. At C214 the chain carries Cysteine methyl ester. The S-geranylgeranyl cysteine moiety is linked to residue C214. A propeptide spans 215–217 (removed in mature form); the sequence is VVL.

The protein belongs to the small GTPase superfamily. Ras family.

The protein localises to the cell membrane. It catalyses the reaction GTP + H2O = GDP + phosphate + H(+). Alternates between an inactive form bound to GDP and an active form bound to GTP. Activated by a guanine nucleotide-exchange factor (GEF) and inactivated by a GTPase-activating protein (GAP). In Lentinula edodes (Shiitake mushroom), this protein is Ras-like protein.